The sequence spans 340 residues: Maltose epimerase (340 aa).

R79 is a binding site for substrate. The Proton donor role is filled by H178. D247 serves as a coordination point for substrate. The active-site Proton acceptor is E305.

The protein belongs to the aldose epimerase family.

It catalyses the reaction alpha-maltose = beta-maltose. It functions in the pathway carbohydrate metabolism; hexose metabolism. In terms of biological role, catalyzes the interconversion of alpha and beta anomers of maltose. The chain is Maltose epimerase from Levilactobacillus brevis (strain ATCC 367 / BCRC 12310 / CIP 105137 / JCM 1170 / LMG 11437 / NCIMB 947 / NCTC 947) (Lactobacillus brevis).